Reading from the N-terminus, the 312-residue chain is Probable cell division protein WhiA (312 aa).

Positions 274–308 (SLKELGTLVPGGPISKSGVNHRLRKLNAYADELRQ) form a DNA-binding region, H-T-H motif.

The protein belongs to the WhiA family.

Involved in cell division and chromosome segregation. This Limosilactobacillus fermentum (strain NBRC 3956 / LMG 18251) (Lactobacillus fermentum) protein is Probable cell division protein WhiA.